Here is a 550-residue protein sequence, read N- to C-terminus: Phosphatidylinositol 4-kinase gamma 2 (550 aa).

Ubiquitin-like domains lie at 34–111 (SVLV…YDPL) and 112–190 (LVTV…VEDT). A disordered region spans residues 228-247 (VDGLNKGSPPVRSAEGTGGT). The PI3K/PI4K catalytic domain occupies 234–532 (GSPPVRSAEG…SVLPASSEAT (299 aa)). Residues 240–246 (SAEGTGG) form a G-loop region. Residues 241 to 247 (AEGTGGT), lysine 263, and 359 to 362 (QMFM) contribute to the ATP site. Residues 392 to 400 (ANADRHAGN) are catalytic loop. Residues 415-441 (PIDHGYCLPENFEDCTFEWLYWPQAKL) form an activation loop region. Residue aspartate 417 participates in ATP binding.

The protein belongs to the PI3/PI4-kinase family. Type II PI4K subfamily.

The protein resides in the membrane. The catalysed reaction is a 1,2-diacyl-sn-glycero-3-phospho-(1D-myo-inositol) + ATP = a 1,2-diacyl-sn-glycero-3-phospho-(1D-myo-inositol 4-phosphate) + ADP + H(+). The phosphorylation of phosphatidylinositol (PI) to PI4P is the first committed step in the generation of phosphatidylinositol 4,5-bisphosphate (PIP2), a precursor of the second messenger inositol 1,4,5-trisphosphate (InsP3). The polypeptide is Phosphatidylinositol 4-kinase gamma 2 (PI4KG2) (Arabidopsis thaliana (Mouse-ear cress)).